The chain runs to 205 residues: Inactive ribonuclease-like protein 9 (205 aa).

The first 24 residues, M1–F24, serve as a signal peptide directing secretion. 3 disulfide bridges follow: C97/C152, C115/C167, and C122/C129. N130 and N142 each carry an N-linked (GlcNAc...) asparagine glycan.

Belongs to the pancreatic ribonuclease family.

It is found in the secreted. Functionally, does not exhibit any ribonuclease activity. The chain is Inactive ribonuclease-like protein 9 (RNASE9) from Cebus albifrons (White-fronted capuchin).